We begin with the raw amino-acid sequence, 345 residues long: DNA-directed RNA polymerases I and III subunit rpac1 (345 aa).

A compositionally biased stretch (polar residues) spans M1 to S11. The tract at residues M1–T20 is disordered.

This sequence belongs to the archaeal Rpo3/eukaryotic RPB3 RNA polymerase subunit family. Component of the RNA polymerase I (Pol I) and RNA polymerase III (Pol III) complexes consisting of at least 13 and 17 subunits, respectively. Interacts with RPAC19/RPAC2.

Its subcellular location is the nucleus. Its function is as follows. DNA-dependent RNA polymerase catalyzes the transcription of DNA into RNA using the four ribonucleoside triphosphates as substrates. Common component of RNA polymerases I and III which synthesize ribosomal RNA precursors and small RNAs, such as 5S rRNA and tRNAs, respectively. RPAC1 is part of the Pol core element with the central large cleft and probably a clamp element that moves to open and close the cleft. The protein is DNA-directed RNA polymerases I and III subunit rpac1 (polr1c) of Dictyostelium discoideum (Social amoeba).